Consider the following 602-residue polypeptide: Histone-arginine methyltransferase CARM1 (602 aa).

The 308-residue stretch at 117-424 (AVQYFQFYGY…KKQSYDISIV (308 aa)) folds into the SAM-dependent MTase PRMT-type domain. The S-adenosyl-L-methionine site is built by Gln130, Arg139, Gly163, Glu185, Glu214, and Ser242. The tract at residues 470 to 602 (TGGAYTMNTG…ITTNTMHYGS (133 aa)) is transactivation domain.

Belongs to the class I-like SAM-binding methyltransferase superfamily. Protein arginine N-methyltransferase family. In terms of assembly, homodimer.

The protein localises to the nucleus. The protein resides in the cytoplasm. It localises to the chromosome. It carries out the reaction L-arginyl-[protein] + 2 S-adenosyl-L-methionine = N(omega),N(omega)-dimethyl-L-arginyl-[protein] + 2 S-adenosyl-L-homocysteine + 2 H(+). Methylates (mono- and asymmetric dimethylation) the guanidino nitrogens of arginyl residues in several proteins involved in DNA packaging, transcription regulation, pre-mRNA splicing, and mRNA stability. Recruited to promoters upon gene activation together with histone acetyltransferases from EP300/P300 and p160 families, methylates histone H3 at 'Arg-17' (H3R17me) and activates transcription via chromatin remodeling. This chain is Histone-arginine methyltransferase CARM1 (carm1), found in Xenopus laevis (African clawed frog).